Reading from the N-terminus, the 391-residue chain is Histamine H4 receptor (391 aa).

The Extracellular segment spans residues 1 to 19 (MSESNSTGILPPAAQVPLA). Asn-5 is a glycosylation site (N-linked (GlcNAc...) asparagine). The chain crosses the membrane as a helical span at residues 20–40 (FLMSSFAFAIMVGNAVVILAF). The Cytoplasmic portion of the chain corresponds to 41–52 (VVDRNLRHRSNY). A helical membrane pass occupies residues 53-73 (FFLNLAISDFLVGLISIPLYI). The Extracellular segment spans residues 74-87 (PHVLFNWNFGSGIC). Cys-87 and Cys-166 are joined by a disulfide. The helical transmembrane segment at 88–108 (MFWLITDYLLCTASVYNIVLI) threads the bilayer. The Cytoplasmic portion of the chain corresponds to 109–131 (SYDRYQSVSNAVSYRAQHTGIMK). Residues 132–152 (IVAQMVAVWILAFLVNGPMIL) traverse the membrane as a helical segment. At 153–174 (ASDSWKNSTNTKDCEPGFVTEW) the chain is on the extracellular side. An N-linked (GlcNAc...) asparagine glycan is attached at Asn-159. A helical membrane pass occupies residues 175–195 (YILTITMLLEFLLPVISVAYF). Residues 196–306 (NVQIYWSLWK…LLRGRKLARS (111 aa)) are Cytoplasmic-facing. The interval 238–258 (TSNPGLKESAASRHSESPRRK) is disordered. Positions 247–256 (AASRHSESPR) are enriched in basic and acidic residues. Residues 307 to 327 (LAILLSAFAICWAPYCLFTIV) form a helical membrane-spanning segment. The Extracellular portion of the chain corresponds to 328 to 343 (LSTYPRTERPKSVWYS). A helical membrane pass occupies residues 344–364 (IAFWLQWFNSFVNPFLYPLCH). The Cytoplasmic portion of the chain corresponds to 365–391 (RRFQKAFWKILCVTKQPALSQNQSVSS).

This sequence belongs to the G-protein coupled receptor 1 family. Interacts with TSPAN4.

It localises to the cell membrane. In terms of biological role, the H4 subclass of histamine receptors could mediate the histamine signals in peripheral tissues. Displays a significant level of constitutive activity (spontaneous activity in the absence of agonist). The chain is Histamine H4 receptor (Hrh4) from Mus musculus (Mouse).